The following is a 339-amino-acid chain: Uricase (339 aa).

Catalysis depends on charge relay system residues lysine 33 and threonine 78. Residues threonine 78, aspartate 79, phenylalanine 201, arginine 218, valine 266, glutamine 267, and asparagine 293 each coordinate urate. Histidine 295 functions as the Charge relay system in the catalytic mechanism. The Microbody targeting signal signature appears at 337–339 (SHL).

It belongs to the uricase family.

The protein localises to the peroxisome. The catalysed reaction is urate + O2 + H2O = 5-hydroxyisourate + H2O2. It functions in the pathway purine metabolism; urate degradation; (S)-allantoin from urate: step 1/3. In terms of biological role, catalyzes the oxidation of uric acid to 5-hydroxyisourate, which is further processed to form (S)-allantoin. This Drosophila subobscura (Fruit fly) protein is Uricase (Uro).